We begin with the raw amino-acid sequence, 248 residues long: 4-hydroxy-tetrahydrodipicolinate reductase (248 aa).

NAD(+) is bound by residues 9-14 (GAKGRV), 77-79 (GTT), and 104-107 (APNF). H134 serves as the catalytic Proton donor/acceptor. (S)-2,3,4,5-tetrahydrodipicolinate is bound at residue H135. Catalysis depends on K138, which acts as the Proton donor. 144–145 (GT) serves as a coordination point for (S)-2,3,4,5-tetrahydrodipicolinate.

This sequence belongs to the DapB family.

The protein localises to the cytoplasm. It carries out the reaction (S)-2,3,4,5-tetrahydrodipicolinate + NAD(+) + H2O = (2S,4S)-4-hydroxy-2,3,4,5-tetrahydrodipicolinate + NADH + H(+). The enzyme catalyses (S)-2,3,4,5-tetrahydrodipicolinate + NADP(+) + H2O = (2S,4S)-4-hydroxy-2,3,4,5-tetrahydrodipicolinate + NADPH + H(+). Its pathway is amino-acid biosynthesis; L-lysine biosynthesis via DAP pathway; (S)-tetrahydrodipicolinate from L-aspartate: step 4/4. Functionally, catalyzes the conversion of 4-hydroxy-tetrahydrodipicolinate (HTPA) to tetrahydrodipicolinate. The protein is 4-hydroxy-tetrahydrodipicolinate reductase of Corynebacterium glutamicum (strain ATCC 13032 / DSM 20300 / JCM 1318 / BCRC 11384 / CCUG 27702 / LMG 3730 / NBRC 12168 / NCIMB 10025 / NRRL B-2784 / 534).